The sequence spans 1582 residues: Hybrid PKS-NRPS synthetase TAS1 (1582 aa).

The segment at 33 to 387 is condensation (C) domain; the sequence is IPLSKVQEVL…GEDTAAASRV (355 aa). The segment at 499–892 is adenylation (A) domain; that stretch reads RSRAATQPDE…KLHILGRMNN (394 aa). Positions 1015-1092 constitute a Carrier domain; the sequence is NLVDRLEASI…RQAQRLSELV (78 aa). The 448-residue stretch at 1127–1574 folds into the Ketosynthase family 3 (KS3) domain; the sequence is APLFAIVGMA…GVNAHCILAS (448 aa). Catalysis depends on for beta-ketoacyl synthase activity residues cysteine 1294 and histidine 1432. The disordered stretch occupies residues 1460 to 1485; sequence ESRCSSGAISPTGTEQQPSDTKQTPR. Polar residues predominate over residues 1462–1485; it reads RCSSGAISPTGTEQQPSDTKQTPR. The For beta-ketoacyl synthase activity role is filled by asparagine 1498.

It in the N-terminal section; belongs to the NRP synthetase family. The cofactor is pantetheine 4'-phosphate.

The catalysed reaction is acetoacetyl-CoA + L-isoleucine + ATP = tenuazonic acid + AMP + diphosphate + CoA + 2 H(+). Its function is as follows. Hybrid PKS-NRPS synthetase that mediates the biosynthesis of the toxin tenuazonic acid (TeA), an inhibitor of protein biosynthesis on ribosomes by suppressing the release of new protein. TAS1 alone is sufficient for TeA synthesis via the condensation of isoleucine (Ile) with acetoacetyl-CoA by the N-terminal NRPS module and subsequent cyclization conducted by the C-terminal KS domain. The chain is Hybrid PKS-NRPS synthetase TAS1 from Cordyceps militaris (strain CM01) (Caterpillar fungus).